The chain runs to 65 residues: Large ribosomal subunit protein uL29 (65 aa).

It belongs to the universal ribosomal protein uL29 family.

This is Large ribosomal subunit protein uL29 (rpmC) from Borreliella burgdorferi (strain ATCC 35210 / DSM 4680 / CIP 102532 / B31) (Borrelia burgdorferi).